The primary structure comprises 389 residues: MAVTKLNPSAAPFHCSRRHLFFAPPPPPPPPMPAYQYHATGACAAAAPPPFPFFATYSCASLPFHGHLYPPCGYQAQMGPAPPGAAFAKGVLAAAPPPPHGRPPHKLMVCKGAPTVTDVKLRAQARAAARVGVAAAVRGWRPAPATAGPPRMLVAAAPCGMLHPAAVARRRGMSKVYKPRKPQRAGRERSPSPSPVFTTRPMSPTPPMQKLKPAHTTVMVRNIPNKLTRSDMVRLLDDHCARENRRRGRGGEPRAEYDLVYVRMDFGMCNKERSSNMGYAFVNFTTAEAARGLQRALHGCRWKRSAFDSGKIIDIRAARIQGKDALVRHFGRTTYYECDTDEYLPAVFSPPRDGSTAGAGAPSPPAVKTVGIRVPPRPITLLTHRGNVN.

Residues 170 to 184 (RRGMSKVYKPRKPQR) show a composition bias toward basic residues. The disordered stretch occupies residues 170–211 (RRGMSKVYKPRKPQRAGRERSPSPSPVFTTRPMSPTPPMQKL). Residues 216-320 (TTVMVRNIPN…KIIDIRAARI (105 aa)) form the RRM domain. Residues 351–370 (PRDGSTAGAGAPSPPAVKTV) form a disordered region.

Its function is as follows. Probable RNA-binding protein that may play a role in growth regulation. This Oryza sativa subsp. japonica (Rice) protein is Protein MEI2-like 7 (OML7).